Here is a 224-residue protein sequence, read N- to C-terminus: Heme response regulator HssR (224 aa).

In terms of domain architecture, Response regulatory spans Gln-3–Leu-116. At Asp-52 the chain carries 4-aspartylphosphate. A DNA-binding region (ompR/PhoB-type) is located at residues Asn-124–Asn-222.

In terms of processing, phosphorylated by HssS.

It localises to the cytoplasm. In terms of biological role, member of the two-component regulatory system HssS/HssR involved in intracellular heme homeostasis and tempering of staphylococcal virulence. Phosphorylated HssR binds to a direct repeat sequence within hrtAB promoter and activates the expression of hrtAB, an efflux pump, in response to extracellular heme, hemin, hemoglobin or blood. This Staphylococcus aureus (strain COL) protein is Heme response regulator HssR (hssR).